A 142-amino-acid polypeptide reads, in one-letter code: Transcription antitermination protein NusB (142 aa).

It belongs to the NusB family.

Its function is as follows. Involved in transcription antitermination. Required for transcription of ribosomal RNA (rRNA) genes. Binds specifically to the boxA antiterminator sequence of the ribosomal RNA (rrn) operons. The sequence is that of Transcription antitermination protein NusB from Streptococcus mutans serotype c (strain ATCC 700610 / UA159).